A 155-amino-acid chain; its full sequence is Regulatory protein RecX (155 aa).

The protein belongs to the RecX family.

Its subcellular location is the cytoplasm. Functionally, modulates RecA activity. The protein is Regulatory protein RecX of Vibrio campbellii (strain ATCC BAA-1116).